The sequence spans 3088 residues: Protein prune homolog 2 (3088 aa).

Position 1 is an N-acetylmethionine (M1). The DHH motif signature appears at 109–111; that stretch reads GSS. 22 disordered regions span residues 433-468, 490-628, 673-759, 771-795, 846-909, 952-1080, 1192-1211, 1231-1371, 1413-1452, 1472-1491, 1515-1585, 1632-1698, 1741-1768, 1782-1813, 2089-2114, 2173-2215, 2240-2260, 2492-2542, 2589-2667, 2687-2710, 2814-2833, and 2841-2875; these read IRSS…GLDS, HFDL…EPAS, SSEQ…QGTN, SGRS…AAVA, SELL…PKTR, SNLG…SSYD, SDEH…NEKS, SFML…LVAS, RDVQ…GMNF, LEPE…SLDF, VKGS…QESE, DSFS…EESI, LDSS…DPWT, VEKE…KNED, ILTH…SEAK, YQAD…PDMA, QEPT…PESQ, SDLP…KNED, TQLA…SELG, ALEE…AGPD, QSEG…EIDI, and PDEA…AEEE. Residues 503 to 512 show a composition bias toward low complexity; sequence SGQSQQSSHS. Positions 562-582 are enriched in basic and acidic residues; the sequence is SLVEHDEEFVQRQDSPRDNSE. Composition is skewed to polar residues over residues 613–625 and 673–684; these read MNSL…STEE and SSEQESVFQSPE. Positions 685-699 are enriched in basic and acidic residues; sequence SWKEHKPSSIDRRAS. A compositionally biased stretch (polar residues) spans 750-759; sequence LPNTSPQGTN. The segment covering 846–857 has biased composition (polar residues); that stretch reads SELLDNSPSEIN. Basic and acidic residues predominate over residues 865–876; the sequence is WGKKNNDSRDHI. The segment covering 881-894 has biased composition (polar residues); that stretch reads NPSSDLDHTWTNSK. A compositionally biased stretch (basic and acidic residues) spans 895 to 909; it reads PPKEDQNGLVDPKTR. Residues 964 to 977 show a composition bias toward low complexity; sequence DTNYSTSDSYTSPT. The segment covering 980–1000 has biased composition (basic and acidic residues); that stretch reads GDEKETEHKPFAKEEGFESKD. 2 stretches are compositionally biased toward polar residues: residues 1001-1027 and 1037-1048; these read GNST…SSGP and HTDNSSEINTTH. Composition is skewed to basic and acidic residues over residues 1049–1062, 1192–1208, 1282–1293, 1314–1339, and 1425–1434; these read NLDE…HTDG, SDEH…HTLN, HLDKQDTERETL, DPWK…RGHL, and QPKDTHEKHL. The segment covering 1436–1450 has biased composition (polar residues); the sequence is SQRNSGETTETSDGM. Residues 1537–1585 are compositionally biased toward polar residues; sequence SSEYTHSSASSPELNDSSVALSSWGQQPSSGYQEENQGNWSEQNHQESE. The segment covering 1687-1698 has biased composition (acidic residues); it reads SDDDSVGGEESI. Polar residues predominate over residues 1752-1768; that stretch reads KSNPFCDNQQSSPDPWT. 2 stretches are compositionally biased toward basic and acidic residues: residues 2516–2542 and 2604–2622; these read EKTI…KNED and NERK…DTRS. The span at 2623 to 2632 shows a compositional bias: polar residues; sequence SFESPAQDQS. Residues 2823-2833 are compositionally biased toward acidic residues; that stretch reads DNLDSPDEIDI. The region spanning 2895–3056 is the CRAL-TRIO domain; sequence DMKVIEPYRR…SIIKLDEELR (162 aa).

Belongs to the PPase class C family. Prune subfamily. A high level of expression seen in the nervous system (brain, cerebellum and spinal cord) as well as adrenal gland. Expressed at high levels in noneuroblastoma, rhabdomyosarcoma, melanoma and some osteosarcoma cell lines, whereas at only low levels in cancer cell lines of liver, breast, thyroid and colon. Expression is significantly higher in favorable tumors than aggressive ones.

The protein resides in the cytoplasm. May play an important role in regulating differentiation, survival and aggressiveness of the tumor cells. In Homo sapiens (Human), this protein is Protein prune homolog 2 (PRUNE2).